Consider the following 323-residue polypeptide: MLDIAMPKIEVVTAAENYGRFKIEPLDPGYGHTLGNALRRVLLSSIPGAAITKIKIEGVFHEFSTIPGVKEDVTEIVLNIKGIRLRSYAERPVKISLSKRGAGVVRAADIDAPSNVEIVNPNHYICTIDRDDAAIDMEMTVERGRGYLPADQRDALPIGEIPIDAIFTPVPKVNYVVEHIRVGQATDIDSLLIEIWTDGTIKPGDALSHAAQVLVQYSQTIADFNRLSTEAEPTTAPNGLAIPADIYDTPIEELDLSTRTYNCLKRADITKVGQVLEMDEKALLSVRNLGQKSMEEIRDKLIERGYIPRIGQTSHAARAEIEG.

The tract at residues 1–225 is alpha N-terminal domain (alpha-NTD); the sequence is MLDIAMPKIE…QYSQTIADFN (225 aa). The interval 246-323 is alpha C-terminal domain (alpha-CTD); sequence IYDTPIEELD…SHAARAEIEG (78 aa).

The protein belongs to the RNA polymerase alpha chain family. As to quaternary structure, homodimer. The RNAP catalytic core consists of 2 alpha, 1 beta, 1 beta' and 1 omega subunit. When a sigma factor is associated with the core the holoenzyme is formed, which can initiate transcription.

The enzyme catalyses RNA(n) + a ribonucleoside 5'-triphosphate = RNA(n+1) + diphosphate. Functionally, DNA-dependent RNA polymerase catalyzes the transcription of DNA into RNA using the four ribonucleoside triphosphates as substrates. This Roseiflexus sp. (strain RS-1) protein is DNA-directed RNA polymerase subunit alpha.